The primary structure comprises 581 residues: Mitosis inhibitor protein kinase mik1 (581 aa).

Disordered regions lie at residues 43-71 and 148-178; these read GHEE…HTPM and NLTN…PLSP. The span at 59–71 shows a compositional bias: polar residues; the sequence is KPSNTKRSPHTPM. Basic residues predominate over residues 160-169; that stretch reads PCKKGTKIKL. One can recognise a Protein kinase domain in the interval 289–561; the sequence is FQQVKPIHES…LLAMPEMIFI (273 aa). Residues 295-303 and K320 contribute to the ATP site; that span reads IHESDFSFV. Residue D417 is the Proton acceptor of the active site. Mg(2+)-binding residues include N422 and D435.

It belongs to the protein kinase superfamily. Ser/Thr protein kinase family. WEE1 subfamily.

It catalyses the reaction L-seryl-[protein] + ATP = O-phospho-L-seryl-[protein] + ADP + H(+). It carries out the reaction L-threonyl-[protein] + ATP = O-phospho-L-threonyl-[protein] + ADP + H(+). Its function is as follows. Protein kinase that acts both on serines and on tyrosines. It acts as a negative regulator of entry into mitosis (G2 to M transition). Phosphorylates and inhibits cdc2. This Schizosaccharomyces pombe (strain 972 / ATCC 24843) (Fission yeast) protein is Mitosis inhibitor protein kinase mik1 (mik1).